We begin with the raw amino-acid sequence, 364 residues long: Fructose-bisphosphate aldolase B (364 aa).

The residue at position 2 (Ala2) is an N-acetylalanine. N6-succinyllysine is present on Lys13. Ser36 carries the post-translational modification Phosphoserine. Thr39 bears the Phosphothreonine mark. Arg43 contacts beta-D-fructose 1,6-bisphosphate. Ser89 carries the post-translational modification Phosphoserine. Position 119 is a phosphothreonine (Thr119). Lys121 carries the N6-succinyllysine modification. Ser132 is modified (phosphoserine). The active-site Proton acceptor is Glu188. Lys230 acts as the Schiff-base intermediate with dihydroxyacetone-P in catalysis. Phosphoserine occurs at positions 272, 276, 299, and 301. A beta-D-fructose 1,6-bisphosphate-binding site is contributed by 272-274; it reads SGG. Arg304 serves as a coordination point for beta-D-fructose 1,6-bisphosphate. Ser309 carries the phosphoserine modification. Lys317 is subject to N6-succinyllysine.

It belongs to the class I fructose-bisphosphate aldolase family. Homotetramer. Interacts with BBS1, BBS2, BBS4 and BBS7. Forms a ternary complex with G6PD and TP53; this interaction is direct.

The protein resides in the cytoplasm. Its subcellular location is the cytosol. The protein localises to the cytoskeleton. It localises to the microtubule organizing center. It is found in the centrosome. The protein resides in the centriolar satellite. It carries out the reaction beta-D-fructose 1,6-bisphosphate = D-glyceraldehyde 3-phosphate + dihydroxyacetone phosphate. The enzyme catalyses beta-D-fructose 1-phosphate = D-glyceraldehyde + dihydroxyacetone phosphate. The protein operates within carbohydrate degradation; glycolysis; D-glyceraldehyde 3-phosphate and glycerone phosphate from D-glucose: step 4/4. It participates in carbohydrate biosynthesis; gluconeogenesis. Its pathway is carbohydrate metabolism; fructose metabolism. Catalyzes the aldol cleavage of fructose 1,6-biphosphate to form two triosephosphates dihydroxyacetone phosphate and D-glyceraldehyde 3-phosphate in glycolysis as well as the reverse stereospecific aldol addition reaction in gluconeogenesis. In fructolysis, metabolizes fructose 1-phosphate derived from the phosphorylation of dietary fructose by fructokinase into dihydroxyacetone phosphate and D-glyceraldehyde. Acts as an adapter independently of its enzymatic activity, exerts a tumor suppressor role by stabilizing the ternary complex with G6PD and TP53 to inhibit G6PD activity and keep oxidative pentose phosphate metabolism in check. The protein is Fructose-bisphosphate aldolase B (Aldob) of Rattus norvegicus (Rat).